We begin with the raw amino-acid sequence, 136 residues long: ATP synthase epsilon chain (136 aa).

The protein belongs to the ATPase epsilon chain family. F-type ATPases have 2 components, CF(1) - the catalytic core - and CF(0) - the membrane proton channel. CF(1) has five subunits: alpha(3), beta(3), gamma(1), delta(1), epsilon(1). CF(0) has three main subunits: a, b and c.

The protein resides in the cell inner membrane. Its function is as follows. Produces ATP from ADP in the presence of a proton gradient across the membrane. This Persephonella marina (strain DSM 14350 / EX-H1) protein is ATP synthase epsilon chain.